Reading from the N-terminus, the 592-residue chain is Frizzled-1 (592 aa).

Positions 1–26 (MAERRGPAGGGSGEVGGGRRAGGDRC) are disordered. Residues 1-48 (MAERRGPAGGGSGEVGGGRRAGGDRCPRRPPALPLLLLLWAAALPAGG) form the signal peptide. The span at 7-20 (PAGGGSGEVGGGRR) shows a compositional bias: gly residues. The Extracellular segment spans residues 49-271 (QPAAQPAALS…PEELRFSRTW (223 aa)). Residues 65–184 (PDHGYCQPIS…HGAGELCVGQ (120 aa)) enclose the FZ domain. Cystine bridges form between Cys70–Cys131, Cys78–Cys124, Cys115–Cys152, Cys141–Cys181, and Cys145–Cys169. An N-linked (GlcNAc...) asparagine glycan is attached at Asn84. N-linked (GlcNAc...) asparagine glycosylation is present at Asn185. Positions 185–219 (NASERGTPTPALRPESWTSNPHRGGGAGGSGPGEA) are disordered. The segment covering 207-218 (RGGGAGGSGPGE) has biased composition (gly residues). Residues 272–292 (IGIWSVLCCASTLFTVLTYLV) traverse the membrane as a helical segment. The Cytoplasmic segment spans residues 293 to 303 (DMKRFSYPERP). Residues 304 to 324 (IIFLSGCYTAVAVAYIAGFLL) form a helical membrane-spanning segment. At 325–351 (EERVVCNERFAEDGSRTVAQGTKREGC) the chain is on the extracellular side. A helical transmembrane segment spans residues 352-372 (TILFMMLYFFGMASSIWWVIL). The Cytoplasmic segment spans residues 373–394 (SLTWFLAAGMKWGHEAIEANSQ). The chain crosses the membrane as a helical span at residues 395-415 (YFHLAAWAVPAIKTITILALG). Residues 416 to 438 (QVDGDVLSGVCFVGINNVDALRG) lie on the Extracellular side of the membrane. The chain crosses the membrane as a helical span at residues 439 to 459 (FVLAPLFVYLFIGTSFLLAGF). Topologically, residues 460–485 (VSLFRIRTIMKHDGTKTEKLEKLMVR) are cytoplasmic. The helical transmembrane segment at 486-506 (IGIFSVLYTVPATIVIACYFY) threads the bilayer. The Extracellular portion of the chain corresponds to 507–546 (EQAFREQWERSWVTQSCKSYAIPCPNNHSSHHPPMSPDFT). N-linked (GlcNAc...) asparagine glycosylation occurs at Asn533. Residues 547–567 (VFMIKYLMTLIVGITSGFWIW) traverse the membrane as a helical segment. The Cytoplasmic portion of the chain corresponds to 568–592 (SGKTLNSWRKFYTRLTNSKQGETTV). The short motif at 570–575 (KTLNSW) is the Lys-Thr-X-X-X-Trp motif, mediates interaction with the PDZ domain of Dvl family members element. The PDZ-binding motif lies at 590 to 592 (TTV).

It belongs to the G-protein coupled receptor Fz/Smo family. As to expression, expressed in the lens, otic placode (medial wall of the vesicle) and in epibranchial placode. Also expressed in the developing somites (dermomyotome).

The protein resides in the cell membrane. Its function is as follows. Receptor for Wnt proteins. Functions in the canonical Wnt/beta-catenin signaling pathway. The canonical Wnt/beta-catenin signaling pathway leads to the activation of disheveled proteins, inhibition of GSK-3 kinase, nuclear accumulation of beta-catenin and activation of Wnt target genes. A second signaling pathway involving PKC and calcium fluxes has been seen for some family members, but it is not yet clear if it represents a distinct pathway or if it can be integrated in the canonical pathway, as PKC seems to be required for Wnt-mediated inactivation of GSK-3 kinase. Both pathways seem to involve interactions with G-proteins. May be involved in transduction and intercellular transmission of polarity information during tissue morphogenesis and/or in differentiated tissues. In Gallus gallus (Chicken), this protein is Frizzled-1 (FZD1).